Consider the following 732-residue polypeptide: Prolyl 3-hydroxylase 3 (732 aa).

Positions 1-19 (MLRLLRLLLLLLLPPPGSP) are cleaved as a signal peptide. Over residues 15-25 (PPGSPEPPEPP) the composition is skewed to pro residues. The segment at 15–35 (PPGSPEPPEPPGLAQLSPGSP) is disordered. 4 TPR repeats span residues 39–72 (PDLLYADGLRAYSAGAWAPAVALLREALRSRAAL), 152–185 (REPYNYLQRAYYQLKKLDLAASAAHTFFVANPTH), 214–247 (YWAAYDTGLELLEQREAALALPQLEEALQGSLAH), and 312–345 (LSQLRRLHEAYAQVGNMSQAMENVLSVLLFYPED). Residues N327 and N458 are each glycosylated (N-linked (GlcNAc...) asparagine). Positions 557 to 671 (THLVCRSAIE…RCALALWHTW (115 aa)) constitute a Fe2OG dioxygenase domain. Residues H580, D582, and H652 each contribute to the Fe cation site. The active site involves R662. Positions 674–703 (EHSEQEWTEAKELLQEEEEEEEEEDILSRD) form a coiled coil. A compositionally biased stretch (basic and acidic residues) spans 676 to 687 (SEQEWTEAKELL). A disordered region spans residues 676 to 732 (SEQEWTEAKELLQEEEEEEEEEDILSRDPSPEPPSHKLQRVQEKAGKPRRVRVREEL). The segment covering 688 to 698 (QEEEEEEEEED) has biased composition (acidic residues). Residues 722 to 732 (KPRRVRVREEL) show a composition bias toward basic residues. The Prevents secretion from ER signature appears at 729–732 (REEL).

The protein belongs to the leprecan family. In terms of assembly, identified in a complex with PLOD1 and P3H4. The cofactor is Fe cation. Requires L-ascorbate as cofactor. In terms of tissue distribution, detected in kidney (at protein level).

The protein resides in the endoplasmic reticulum. It catalyses the reaction L-prolyl-[collagen] + 2-oxoglutarate + O2 = trans-3-hydroxy-L-prolyl-[collagen] + succinate + CO2. Part of a complex composed of PLOD1, P3H3 and P3H4 that catalyzes hydroxylation of lysine residues in collagen alpha chains and is required for normal assembly and cross-linkling of collagen fibrils. Required for normal hydroxylation of lysine residues in type I collagen chains in skin, bone, tendon, aorta and cornea. Required for normal skin stability via its role in hydroxylation of lysine residues in collagen alpha chains and in collagen fibril assembly. Apparently not required for normal prolyl 3-hydroxylation on collagen chains, possibly because it functions redundantly with other prolyl 3-hydroxylases. The protein is Prolyl 3-hydroxylase 3 of Mus musculus (Mouse).